The primary structure comprises 393 residues: Bone morphogenetic protein 15 (393 aa).

Residues 1–25 (MVLLSILRILLWGLVLFMEHRVQMT) form the signal peptide. A propeptide spanning residues 26–268 (QVGQPSIAHL…DPSLLLRRAR (243 aa)) is cleaved from the precursor. Asn-86 and Asn-237 each carry an N-linked (GlcNAc...) asparagine glycan. 3 disulfide bridges follow: Cys-292–Cys-358, Cys-321–Cys-390, and Cys-325–Cys-392. N-linked (GlcNAc...) asparagine glycosylation is present at Asn-374.

This sequence belongs to the TGF-beta family. In terms of assembly, homodimer. But, in contrast to other members of this family, cannot be disulfide-linked.

Its subcellular location is the secreted. Its function is as follows. May be involved in follicular development. Oocyte-specific growth/differentiation factor that stimulates folliculogenesis and granulosa cell (GC) growth. The sequence is that of Bone morphogenetic protein 15 (BMP15) from Ovis aries (Sheep).